The primary structure comprises 225 residues: 7-cyano-7-deazaguanine synthase (225 aa).

ATP is bound at residue 9–19 (LSGGLDSATCL). Zn(2+)-binding residues include Cys-189, Cys-199, Cys-202, and Cys-205.

The protein belongs to the QueC family. Zn(2+) is required as a cofactor.

The catalysed reaction is 7-carboxy-7-deazaguanine + NH4(+) + ATP = 7-cyano-7-deazaguanine + ADP + phosphate + H2O + H(+). It functions in the pathway purine metabolism; 7-cyano-7-deazaguanine biosynthesis. Catalyzes the ATP-dependent conversion of 7-carboxy-7-deazaguanine (CDG) to 7-cyano-7-deazaguanine (preQ(0)). The sequence is that of 7-cyano-7-deazaguanine synthase from Dechloromonas aromatica (strain RCB).